A 464-amino-acid chain; its full sequence is UDP-N-acetylmuramate--L-alanine ligase (464 aa).

An ATP-binding site is contributed by 111–117 (GAHGKTT).

Belongs to the MurCDEF family.

It localises to the cytoplasm. The enzyme catalyses UDP-N-acetyl-alpha-D-muramate + L-alanine + ATP = UDP-N-acetyl-alpha-D-muramoyl-L-alanine + ADP + phosphate + H(+). Its pathway is cell wall biogenesis; peptidoglycan biosynthesis. Functionally, cell wall formation. This is UDP-N-acetylmuramate--L-alanine ligase from Dictyoglomus turgidum (strain DSM 6724 / Z-1310).